Here is a 137-residue protein sequence, read N- to C-terminus: Large ribosomal subunit protein uL16 (137 aa).

This sequence belongs to the universal ribosomal protein uL16 family. Part of the 50S ribosomal subunit.

Binds 23S rRNA and is also seen to make contacts with the A and possibly P site tRNAs. The chain is Large ribosomal subunit protein uL16 from Acinetobacter baylyi (strain ATCC 33305 / BD413 / ADP1).